The chain runs to 333 residues: Autoinducer 2 import system permease protein LsrD (333 aa).

The next 10 membrane-spanning stretches (helical) occupy residues 7-27 (YGWE…FGLS), 45-65 (ICIG…GIDI), 67-87 (FGST…AGVP), 90-110 (VAIP…AGLI), 118-138 (LVIT…LSGL), 162-182 (LFGL…FWLL), 212-232 (TLCM…ILLV), 240-260 (SDLG…GGAN), 261-281 (IYGG…VGYL), and 288-308 (IGTP…LVVV).

It belongs to the binding-protein-dependent transport system permease family. AraH/RbsC subfamily. In terms of assembly, the complex is composed of two ATP-binding proteins (LsrA), two transmembrane proteins (LsrC and LsrD) and a solute-binding protein (LsrB).

The protein localises to the cell inner membrane. In terms of biological role, part of the ABC transporter complex LsrABCD involved in autoinducer 2 (AI-2) import. Probably responsible for the translocation of the substrate across the membrane. The polypeptide is Autoinducer 2 import system permease protein LsrD (lsrD) (Yersinia pestis bv. Antiqua (strain Antiqua)).